The following is a 171-amino-acid chain: Lipoprotein signal peptidase (171 aa).

4 consecutive transmembrane segments (helical) span residues 15–35 (WLWL…IVMD), 47–67 (VLPF…SFLS), 72–92 (WQRW…AYWM), and 107–127 (ALII…GFVV). Catalysis depends on residues Asp128 and Asp146. The chain crosses the membrane as a helical span at residues 141–161 (AFNLADSTICIGAAMIILDGF).

This sequence belongs to the peptidase A8 family.

The protein localises to the cell inner membrane. It catalyses the reaction Release of signal peptides from bacterial membrane prolipoproteins. Hydrolyzes -Xaa-Yaa-Zaa-|-(S,diacylglyceryl)Cys-, in which Xaa is hydrophobic (preferably Leu), and Yaa (Ala or Ser) and Zaa (Gly or Ala) have small, neutral side chains.. The protein operates within protein modification; lipoprotein biosynthesis (signal peptide cleavage). This protein specifically catalyzes the removal of signal peptides from prolipoproteins. The sequence is that of Lipoprotein signal peptidase from Vibrio cholerae serotype O1 (strain ATCC 39315 / El Tor Inaba N16961).